The following is a 276-amino-acid chain: Phosphonoacetaldehyde hydrolase (276 aa).

Asp-19 functions as the Nucleophile in the catalytic mechanism. 2 residues coordinate Mg(2+): Asp-19 and Ala-21. The active-site Schiff-base intermediate with substrate is the Lys-60. Asp-193 contributes to the Mg(2+) binding site.

It belongs to the HAD-like hydrolase superfamily. PhnX family. In terms of assembly, homodimer. It depends on Mg(2+) as a cofactor.

The enzyme catalyses phosphonoacetaldehyde + H2O = acetaldehyde + phosphate + H(+). In terms of biological role, involved in phosphonate degradation. This Bordetella bronchiseptica (strain ATCC BAA-588 / NCTC 13252 / RB50) (Alcaligenes bronchisepticus) protein is Phosphonoacetaldehyde hydrolase.